Consider the following 354-residue polypeptide: MTDIDYKLEAVPATRIAADDIDKTFRSSTIDLISGALGGKVLGFSDEWFAEAANLLTPTAPIRQPGKMVYTGAWYDGWETRRHNPAEFDWVVIRLGVASGTVEGVEIDTAFFNGNHAPAISVEGCFSQNDDEVLSWKGERGGWETILGVQECGPSQRFGWKLENPTKKQYTHVRLNMYPDGGIARFRLFGHAVPVFPDNTDAIFDLAAAQNGGVAISCSDQHFGTKDNLILPGRGKDMGDGWETARSRTKGHVDWTIIRLGAPGYIQNFMVDTAHFRGNYPQQVKLQAIEWKSEGEPGADSEGWTEVVEPIKCGPDQEHPVESLVKDKPFTHVKLIIVPDGGVKRLRVFAKRAV.

The protein belongs to the allantoicase family.

The enzyme catalyses allantoate + H2O = (S)-ureidoglycolate + urea. It functions in the pathway nitrogen metabolism; (S)-allantoin degradation; (S)-ureidoglycolate from allantoate (aminidohydrolase route): step 1/1. In terms of biological role, utilization of purines as secondary nitrogen sources, when primary sources are limiting. In Neurospora crassa (strain ATCC 24698 / 74-OR23-1A / CBS 708.71 / DSM 1257 / FGSC 987), this protein is Allantoicase (alc-1).